Here is a 201-residue protein sequence, read N- to C-terminus: Oligoribonuclease (201 aa).

Residues 20 to 183 (LVWLDMEMTG…ADIHESIDEL (164 aa)) enclose the Exonuclease domain. Residue Y141 is part of the active site.

The protein belongs to the oligoribonuclease family.

The protein resides in the cytoplasm. In terms of biological role, 3'-to-5' exoribonuclease specific for small oligoribonucleotides. The chain is Oligoribonuclease from Burkholderia pseudomallei (strain 1106a).